The following is a 439-amino-acid chain: Proline--tRNA ligase (439 aa).

Belongs to the class-II aminoacyl-tRNA synthetase family. ProS type 2 subfamily. In terms of assembly, homodimer.

It localises to the cytoplasm. It catalyses the reaction tRNA(Pro) + L-proline + ATP = L-prolyl-tRNA(Pro) + AMP + diphosphate. Catalyzes the attachment of proline to tRNA(Pro) in a two-step reaction: proline is first activated by ATP to form Pro-AMP and then transferred to the acceptor end of tRNA(Pro). The protein is Proline--tRNA ligase of Beijerinckia indica subsp. indica (strain ATCC 9039 / DSM 1715 / NCIMB 8712).